Consider the following 838-residue polypeptide: DNA gyrase subunit A (838 aa).

A Topo IIA-type catalytic domain is found at 41–510 (LPEVRDGLKP…ADGDVSDEDL (470 aa)). Catalysis depends on Y129, which acts as the O-(5'-phospho-DNA)-tyrosine intermediate. Residues 537-543 (QKRGGKG) carry the GyrA-box motif.

It belongs to the type II topoisomerase GyrA/ParC subunit family. Heterotetramer, composed of two GyrA and two GyrB chains. In the heterotetramer, GyrA contains the active site tyrosine that forms a transient covalent intermediate with DNA, while GyrB binds cofactors and catalyzes ATP hydrolysis.

Its subcellular location is the cytoplasm. The catalysed reaction is ATP-dependent breakage, passage and rejoining of double-stranded DNA.. A type II topoisomerase that negatively supercoils closed circular double-stranded (ds) DNA in an ATP-dependent manner to modulate DNA topology and maintain chromosomes in an underwound state. Negative supercoiling favors strand separation, and DNA replication, transcription, recombination and repair, all of which involve strand separation. Also able to catalyze the interconversion of other topological isomers of dsDNA rings, including catenanes and knotted rings. Type II topoisomerases break and join 2 DNA strands simultaneously in an ATP-dependent manner. The chain is DNA gyrase subunit A from Mycobacterium tuberculosis (strain CDC 1551 / Oshkosh).